The sequence spans 115 residues: U3-lycotoxin-Ls1a (115 aa).

The first 20 residues, 1 to 20 (MKFVLLFGVLLVTLFSYSSA), serve as a signal peptide directing secretion. Residues 21–44 (EMLDDFDQADEEELLSLIEKEEAR) constitute a propeptide that is removed on maturation. Disulfide bonds link C48–C63, C55–C72, C62–C87, and C74–C85.

Belongs to the neurotoxin 19 (CSTX) family. 01 subfamily. As to expression, expressed by the venom gland.

It is found in the secreted. This Lycosa singoriensis (Wolf spider) protein is U3-lycotoxin-Ls1a.